The sequence spans 318 residues: Myeloid-associated differentiation marker (318 aa).

MARVEL domains lie at 25 to 157 (ALTQ…ARPG) and 162 to 315 (YMAT…RLVF). Helical transmembrane passes span 35 to 55 (LLQL…GAWT), 58 to 78 (MGNW…IILI), 95 to 115 (FPIT…IIYP), 131 to 151 (AIAA…EVAW), 165 to 185 (TVPG…FAFI), 197 to 217 (LEWC…TVLL), 233 to 253 (FLSG…VLWP), and 290 to 310 (LAVS…LVYS).

Belongs to the MAL family.

The protein localises to the membrane. This is Myeloid-associated differentiation marker (Myadm) from Rattus norvegicus (Rat).